The sequence spans 362 residues: Protein RAFTIN 1B (362 aa).

An N-terminal signal peptide occupies residues 1–20 (MARFLVALLAATLVAVQAGG). Residues 58–94 (STSFVRDPEDRPPFDYRDYSRSSSDDEPSKSTVAASG) form a disordered region. Positions 63-86 (RDPEDRPPFDYRDYSRSSSDDEPS) are enriched in basic and acidic residues. Residue Asn102 is glycosylated (N-linked (GlcNAc...) asparagine). Positions 142 to 356 (FFHEEAVRVG…PYGHIIWAKN (215 aa)) constitute a BURP domain.

As to expression, specifically expressed in anthers, in the tapetum and microspores (at protein level).

In terms of biological role, required for pollen development. Probably synthesized in the tapetum, packaged in Ubisch bodies and transported at appropriate stages to the micropsores. The protein is Protein RAFTIN 1B (RAFTIN1B) of Triticum aestivum (Wheat).